Reading from the N-terminus, the 244-residue chain is Adiponectin (244 aa).

An N-terminal signal peptide occupies residues 1–18; sequence MLLLGAVLLLLALPGHDQ. O-linked (GalNAc...) threonine glycans are attached at residues Thr21 and Thr22. Lys33 carries the post-translational modification 5-hydroxylysine. Cys36 is subject to S-(2-succinyl)cysteine. The segment at 40 to 101 is disordered; it reads MAGIPGHPGH…RGFPGIQGRK (62 aa). Residues 42-107 form the Collagen-like domain; that stretch reads GIPGHPGHNG…QGRKGEPGEG (66 aa). A 4-hydroxyproline mark is found at Pro44, Pro47, and Pro53. Basic and acidic residues predominate over residues 55–70; that stretch reads RDGRDGTPGEKGEKGD. Lys65 and Lys68 each carry 5-hydroxylysine. Lys65 and Lys68 each carry an O-linked (Gal...) hydroxylysine; partial glycan. 2 positions are modified to 4-hydroxyproline; partial: Pro71 and Pro76. The residue at position 77 (Lys77) is a 5-hydroxylysine. The O-linked (Gal...) hydroxylysine; partial glycan is linked to Lys77. 4-hydroxyproline is present on Pro91. Pro95 is modified (4-hydroxyproline; partial). Lys101 is modified (5-hydroxylysine). Lys101 is a glycosylation site (O-linked (Gal...) hydroxylysine; partial). In terms of domain architecture, C1q spans 108-244; it reads AYVYRSAFSV…TGFLLYHDTN (137 aa).

Homomultimer. Forms trimers, hexamers and 12- to 18-mers. The trimers (low molecular weight complexes / LMW) are assembled via non-covalent interactions of the collagen-like domains in a triple helix and hydrophobic interactions within the globular C1q domain. Several trimers can associate to form disulfide-linked hexamers (middle molecular weight complexes / MMW) and larger complexes (higher molecular weight / HMW). The HMW-complex assembly is also modulated by the degree of lysine hydroxylation and glycosylation. LMW, MMW and HMW complexes bind to HBEGF, MMW and HMW complexes bind to PDGFB, and HMW complex binds to FGF2. Interacts with CTRP9 via the C1q domain (heterotrimeric complex). In terms of processing, HMW complexes are more extensively glycosylated than smaller oligomers. Hydroxylation and glycosylation of the lysine residues within the collagen-like domain of adiponectin seem to be critically involved in regulating the formation and/or secretion of HMW complexes and consequently contribute to the insulin-sensitizing activity of adiponectin in hepatocytes. O-glycosylated. Not N-glycosylated. O-linked glycans on hydroxylysines consist of Glc-Gal disaccharides bound to the oxygen atom of post-translationally added hydroxyl groups. Sialylated to varying degrees depending on tissue. Thr-22 appears to be the major site of sialylation. Higher sialylation found in SGBS adipocytes than in HEK fibroblasts. Sialylation is not required neither for heterodimerization nor for secretion. Not sialylated on the glycosylated hydroxylysines. Desialylated forms are rapidly cleared from the circulation. Post-translationally, succination of Cys-36 by the Krebs cycle intermediate fumarate, which leads to S-(2-succinyl)cysteine residues, inhibits polymerization and secretion of adiponectin. Adiponectin is a major target for succination in both adipocytes and adipose tissue of diabetic mammals. It was proposed that succination of proteins is a biomarker of mitochondrial stress and accumulation of Krebs cycle intermediates in adipose tissue in diabetes and that succination of adiponectin may contribute to the decrease in plasma adiponectin in diabetes. Synthesized exclusively by adipocytes and secreted into plasma.

The protein localises to the secreted. With respect to regulation, polymerization and secretion of adiponectin is inhibited by succination of cysteine residues by the Krebs cycle intermediate fumarate, which leads to S-(2-succinyl)cysteine residues. Functionally, important adipokine involved in the control of fat metabolism and insulin sensitivity, with direct anti-diabetic, anti-atherogenic and anti-inflammatory activities. Stimulates AMPK phosphorylation and activation in the liver and the skeletal muscle, enhancing glucose utilization and fatty-acid combustion. Antagonizes TNF-alpha by negatively regulating its expression in various tissues such as liver and macrophages, and also by counteracting its effects. Inhibits endothelial NF-kappa-B signaling through a cAMP-dependent pathway. May play a role in cell growth, angiogenesis and tissue remodeling by binding and sequestering various growth factors with distinct binding affinities, depending on the type of complex, LMW, MMW or HMW. In Homo sapiens (Human), this protein is Adiponectin (ADIPOQ).